The primary structure comprises 745 residues: Cellulose synthase-like protein E2 (745 aa).

Residues 1-14 (MAGSGGGVVSGGRQ) are compositionally biased toward gly residues. The tract at residues 1–20 (MAGSGGGVVSGGRQRGPPLF) is disordered. Transmembrane regions (helical) follow at residues 29–49 (AMAA…LIWL) and 66–86 (WAWL…VLTL). Active-site residues include D155 and D458. A run of 5 helical transmembrane segments spans residues 541–561 (FPTL…ISLF), 568–588 (WFIP…AESL), 658–678 (AMFV…VLGI), 686–706 (GPGG…IVAI), and 723–743 (LPAS…ILSI).

The protein belongs to the glycosyltransferase 2 family. Plant cellulose synthase-like E subfamily.

The protein resides in the golgi apparatus membrane. Functionally, thought to be a Golgi-localized beta-glycan synthase that polymerize the backbones of noncellulosic polysaccharides (hemicelluloses) of plant cell wall. In Oryza sativa subsp. japonica (Rice), this protein is Cellulose synthase-like protein E2 (CSLE2).